Consider the following 708-residue polypeptide: Chaperonin-containing T-complex member BBS12 (708 aa).

This sequence belongs to the TCP-1 chaperonin family. BBS12 subfamily. In terms of assembly, component of the chaperonin-containing T-complex (TRiC), a heterooligomeric complex of about 850 to 900 kDa that forms two stacked rings, 12 to 16 nm in diameter. Interacts with MKKS.

The protein localises to the cell projection. It localises to the cilium. Its function is as follows. Component of the chaperonin-containing T-complex (TRiC), a molecular chaperone complex that assists the folding of proteins upon ATP hydrolysis. As part of the TRiC complex may play a role in the assembly of BBSome, a complex involved in ciliogenesis regulating transports vesicles to the cilia. Involved in adipogenic differentiation. This chain is Chaperonin-containing T-complex member BBS12 (Bbs12), found in Mus musculus (Mouse).